Consider the following 468-residue polypeptide: MTKTLPKDFIFGGATAAYQAEGATHTDGKGPVAWDKYLEDNYWYTAEPASDFYHKYPVDLALAEEYGVNGIRISIAWSRIFPTGYGEVNLKGVEFYHKLFEECHKRHVEPFVTLHHFDTPEALHSNGDFLNRDNIEHFVNYAAFCFEEFPEVNYWTTFNEIGPIGDGQYLVGKFPPGIQYDLAKVFQSHHNMMVSHARAVKLYKDKGYKGEIGVVHALPTKYPLDPENSADVRAAELEDIIHNKFILDATYLGYYSEMTMAGVKHILKENGGELDLREEDFQALEAAKDLNDFLGINYYMSDWMQAFDGETEIIHNGKGEKGSSKYQIKGVGRRVAPDYVPKTDWDWIIYPQGLYDQIMRVKNDYPNYKKIYITENGLGYKDEFVDNTVYDDGRIDYVKQHLEVLSEAISDGANVKGYFIWSLMDVFSWSNGYEKRYGLFYVDFETQERYPKKSAHWYKQVAKTQIIE.

D-galactose 6-phosphate-binding residues include Gln19, His116, Asn159, Glu160, and Asn297. Glu160 acts as the Proton donor in catalysis. Catalysis depends on Glu375, which acts as the Nucleophile. D-galactose 6-phosphate-binding residues include Ser428, Trp429, Lys435, and Tyr437.

Belongs to the glycosyl hydrolase 1 family.

The enzyme catalyses a 6-phospho-beta-D-galactoside + H2O = D-galactose 6-phosphate + an alcohol. Its pathway is carbohydrate metabolism; lactose degradation; D-galactose 6-phosphate and beta-D-glucose from lactose 6-phosphate: step 1/1. This Streptococcus agalactiae serotype III (strain NEM316) protein is 6-phospho-beta-galactosidase.